The primary structure comprises 247 residues: tRNA pseudouridine synthase A (247 aa).

The active-site Nucleophile is the D52. Y110 is a binding site for substrate.

This sequence belongs to the tRNA pseudouridine synthase TruA family. As to quaternary structure, homodimer.

It carries out the reaction uridine(38/39/40) in tRNA = pseudouridine(38/39/40) in tRNA. In terms of biological role, formation of pseudouridine at positions 38, 39 and 40 in the anticodon stem and loop of transfer RNAs. In Hyphomonas neptunium (strain ATCC 15444), this protein is tRNA pseudouridine synthase A.